The following is a 781-amino-acid chain: ATP-dependent 6-phosphofructokinase (781 aa).

Positions 1 to 394 (MATWMEGKYV…NLATYIKLSK (394 aa)) are N-terminal catalytic PFK domain 1. Residues Gly-27, 90-91 (RC), and 120-123 (GDGS) contribute to the ATP site. Asp-121 serves as a coordination point for Mg(2+). Substrate-binding positions include 166 to 168 (SID), Arg-203, 210 to 212 (MGR), Glu-266, Arg-294, and 300 to 303 (HVQR). Catalysis depends on Asp-168, which acts as the Proton acceptor. Residues 395–409 (IEQPRQSVMSSENNL) form an interdomain linker region. A C-terminal regulatory PFK domain 2 region spans residues 410–781 (RIGIVNVGAP…ESIMAGTDRK (372 aa)). Beta-D-fructose 2,6-bisphosphate-binding positions include Arg-479, 537–541 (TISNN), Arg-575, 582–584 (MGG), Asp-638, Arg-664, 670–673 (HMQQ), and Arg-745.

This sequence belongs to the phosphofructokinase type A (PFKA) family. ATP-dependent PFK group I subfamily. Eukaryotic two domain clade 'E' sub-subfamily. As to quaternary structure, homotetramer. The cofactor is Mg(2+).

It is found in the cytoplasm. The enzyme catalyses beta-D-fructose 6-phosphate + ATP = beta-D-fructose 1,6-bisphosphate + ADP + H(+). Its pathway is carbohydrate degradation; glycolysis; D-glyceraldehyde 3-phosphate and glycerone phosphate from D-glucose: step 3/4. With respect to regulation, allosterically activated by ADP, AMP, or fructose 2,6-bisphosphate, and allosterically inhibited by ATP or citrate. In terms of biological role, catalyzes the phosphorylation of D-fructose 6-phosphate to fructose 1,6-bisphosphate by ATP, the first committing step of glycolysis. The chain is ATP-dependent 6-phosphofructokinase (PFK) from Schistosoma mansoni (Blood fluke).